Reading from the N-terminus, the 145-residue chain is UPF0179 protein TV1250 (145 aa).

It belongs to the UPF0179 family.

This chain is UPF0179 protein TV1250, found in Thermoplasma volcanium (strain ATCC 51530 / DSM 4299 / JCM 9571 / NBRC 15438 / GSS1).